The following is a 184-amino-acid chain: Probable RNA 2'-phosphotransferase (184 aa).

This sequence belongs to the KptA/TPT1 family.

Functionally, removes the 2'-phosphate from RNA via an intermediate in which the phosphate is ADP-ribosylated by NAD followed by a presumed transesterification to release the RNA and generate ADP-ribose 1''-2''-cyclic phosphate (APPR&gt;P). May function as an ADP-ribosylase. The protein is Probable RNA 2'-phosphotransferase of Escherichia coli O6:K15:H31 (strain 536 / UPEC).